Reading from the N-terminus, the 510-residue chain is Serine carboxypeptidase-like 48 (510 aa).

An N-terminal signal peptide occupies residues 1–25; it reads MDSKTTFLTFLLCIFIFSHFSPSTS. 3 disulfide bridges follow: cysteine 141-cysteine 383, cysteine 309-cysteine 326, and cysteine 349-cysteine 354. 2 N-linked (GlcNAc...) asparagine glycosylation sites follow: asparagine 158 and asparagine 159. Serine 231 is a catalytic residue. Catalysis depends on residues aspartate 421 and histidine 478.

The protein belongs to the peptidase S10 family. In terms of tissue distribution, ubiquitous.

The protein resides in the secreted. In terms of biological role, probable carboxypeptidase. This Arabidopsis thaliana (Mouse-ear cress) protein is Serine carboxypeptidase-like 48 (SCPL48).